We begin with the raw amino-acid sequence, 239 residues long: MKNDVISPEFDENGRPLRRIRSFVRRQGRLTKGQEHALENYWPVMGVEFSEAPVDFATLFGREAPVTLEIGFGMGASLVAMVKARPEQNFLGIEVHSPGVGACLASAHEEGVENLRVMCHDAVEVLHKMIPDNSLSMVQLFFPDPWHKARHNKRRIVQVPFAELVLSKLKLGGVFHMATDWEAYAEHMLEVMSSIDGYKNLSESNDYVPRPESRPVTKFEQRGHRLGHGVWDLMFERVK.

S-adenosyl-L-methionine contacts are provided by E69, E94, D121, and D144. The active site involves D144. Residue K148 participates in substrate binding. An interaction with RNA region spans residues 150 to 155 (RHNKRR). Substrate-binding positions include D180 and 217-220 (TKFE).

It belongs to the class I-like SAM-binding methyltransferase superfamily. TrmB family. As to quaternary structure, monomer.

The enzyme catalyses guanosine(46) in tRNA + S-adenosyl-L-methionine = N(7)-methylguanosine(46) in tRNA + S-adenosyl-L-homocysteine. It participates in tRNA modification; N(7)-methylguanine-tRNA biosynthesis. In terms of biological role, catalyzes the formation of N(7)-methylguanine at position 46 (m7G46) in tRNA. In Salmonella paratyphi A (strain ATCC 9150 / SARB42), this protein is tRNA (guanine-N(7)-)-methyltransferase.